We begin with the raw amino-acid sequence, 262 residues long: GTP cyclohydrolase 1 type 2 homolog (262 aa).

A divalent metal cation-binding residues include histidine 64, histidine 65, aspartate 103, histidine 224, and glutamate 228.

Belongs to the GTP cyclohydrolase I type 2/NIF3 family. As to quaternary structure, homohexamer.

The protein is GTP cyclohydrolase 1 type 2 homolog of Clostridium perfringens (strain 13 / Type A).